The sequence spans 359 residues: Palmitoyltransferase ERF2 (359 aa).

The interval 1–21 (MALVSRRSTRSESTSITKEEH) is disordered. Over 1 to 75 (MALVSRRSTR…RFRTVKGAKP (75 aa)) the chain is Cytoplasmic. Residues 76–96 (LWLGVLLAIVCPMVLFSIFEA) form a helical membrane-spanning segment. The Lumenal portion of the chain corresponds to 97–104 (HKLWHTQN). Residues 105–125 (GYKVLVIFFYYFWVITLASFI) traverse the membrane as a helical segment. At 126-217 (RTATSDPGVL…NCIGKRNYRF (92 aa)) the chain is on the cytoplasmic side. Positions 173-223 (KYCPSCRIWRPPRSSHCSTCNVCVMVHDHHCIWVNNCIGKRNYRFFLIFLL) constitute a DHHC domain. C203 (S-palmitoyl cysteine intermediate) is an active-site residue. A helical membrane pass occupies residues 218 to 238 (FLIFLLGAILSSVILLTNCAI). Residues 239–250 (HIARESGGPRDC) lie on the Lumenal side of the membrane. Residues 251–271 (PVAILLLCYAGLTLWYPAILF) form a helical membrane-spanning segment. Residues 272-359 (TYHIFMAGNQ…AHSFEKIQKI (88 aa)) are Cytoplasmic-facing.

Belongs to the DHHC palmitoyltransferase family. ERF2/ZDHHC9 subfamily. In terms of assembly, interacts with SHR5. Post-translationally, autopalmitoylated.

The protein resides in the endoplasmic reticulum membrane. The enzyme catalyses L-cysteinyl-[protein] + hexadecanoyl-CoA = S-hexadecanoyl-L-cysteinyl-[protein] + CoA. The ERF2-SHR5 complex is a palmitoyltransferase specific for Ras proteins. Palmitoylates RAS2, which is required for its proper plasma membrane localization. The sequence is that of Palmitoyltransferase ERF2 (ERF2) from Saccharomyces cerevisiae (strain ATCC 204508 / S288c) (Baker's yeast).